The chain runs to 388 residues: Succinate--CoA ligase [ADP-forming] subunit beta (388 aa).

One can recognise an ATP-grasp domain in the interval 9–244 (KQLFAEYGLP…PSQDDPREAH (236 aa)). ATP-binding positions include K46, 53–55 (GRG), E99, T102, and E107. Mg(2+)-binding residues include N199 and D213. Substrate-binding positions include N264 and 321–323 (GIV).

It belongs to the succinate/malate CoA ligase beta subunit family. As to quaternary structure, heterotetramer of two alpha and two beta subunits. Mg(2+) serves as cofactor.

It carries out the reaction succinate + ATP + CoA = succinyl-CoA + ADP + phosphate. The enzyme catalyses GTP + succinate + CoA = succinyl-CoA + GDP + phosphate. It functions in the pathway carbohydrate metabolism; tricarboxylic acid cycle; succinate from succinyl-CoA (ligase route): step 1/1. Succinyl-CoA synthetase functions in the citric acid cycle (TCA), coupling the hydrolysis of succinyl-CoA to the synthesis of either ATP or GTP and thus represents the only step of substrate-level phosphorylation in the TCA. The beta subunit provides nucleotide specificity of the enzyme and binds the substrate succinate, while the binding sites for coenzyme A and phosphate are found in the alpha subunit. In Ectopseudomonas mendocina (strain ymp) (Pseudomonas mendocina), this protein is Succinate--CoA ligase [ADP-forming] subunit beta.